The sequence spans 343 residues: MSITYKKAGVDIDEADKFVSMISPIVKTTFRKEVLTEIGLFAGLFKFDVKKYKEPVLVSGTDGVGTKLKIAFEADKHDTVGIDLVAMCVNDILTVGAEPLFFLDYFATGKLNAAKATEVIKGIVQGCKEAGCALIGGETAELPRFYKKNEYDLAGFAVGVVDRKEIIDGSSIKEGDVFIGVASSGLHSNGFSLARKVLFDIGKLRIDQYIPELNCILAKELLKPTEIYVKAYFALKDKVKVKGMAHITGGGIPGNLSRILPKNITAILDKNSWTVPSIFHLIKNIGKINEAEMFKVFNMGIGYIFVVEQNEIQKSLAILNKKGYKAYLIGKASKGGEDKITIK.

It belongs to the AIR synthase family.

It localises to the cytoplasm. It catalyses the reaction 2-formamido-N(1)-(5-O-phospho-beta-D-ribosyl)acetamidine + ATP = 5-amino-1-(5-phospho-beta-D-ribosyl)imidazole + ADP + phosphate + H(+). The protein operates within purine metabolism; IMP biosynthesis via de novo pathway; 5-amino-1-(5-phospho-D-ribosyl)imidazole from N(2)-formyl-N(1)-(5-phospho-D-ribosyl)glycinamide: step 2/2. This is Phosphoribosylformylglycinamidine cyclo-ligase from Thermodesulfovibrio yellowstonii (strain ATCC 51303 / DSM 11347 / YP87).